We begin with the raw amino-acid sequence, 185 residues long: Ribosome-recycling factor (185 aa).

Belongs to the RRF family.

It is found in the cytoplasm. Responsible for the release of ribosomes from messenger RNA at the termination of protein biosynthesis. May increase the efficiency of translation by recycling ribosomes from one round of translation to another. In Chromohalobacter salexigens (strain ATCC BAA-138 / DSM 3043 / CIP 106854 / NCIMB 13768 / 1H11), this protein is Ribosome-recycling factor.